The chain runs to 98 residues: NADH-ubiquinone oxidoreductase chain 4L (98 aa).

Transmembrane regions (helical) follow at residues 1–21, 29–49, and 61–81; these read MALIYTNTLLAFTISLLGLLL, SLLCLEGMMLSMFVMVAVMIL, and IVLLVFAACEAALGLSLLVMV.

Belongs to the complex I subunit 4L family. In terms of assembly, core subunit of respiratory chain NADH dehydrogenase (Complex I) which is composed of 45 different subunits.

Its subcellular location is the mitochondrion inner membrane. The enzyme catalyses a ubiquinone + NADH + 5 H(+)(in) = a ubiquinol + NAD(+) + 4 H(+)(out). Core subunit of the mitochondrial membrane respiratory chain NADH dehydrogenase (Complex I) which catalyzes electron transfer from NADH through the respiratory chain, using ubiquinone as an electron acceptor. Part of the enzyme membrane arm which is embedded in the lipid bilayer and involved in proton translocation. This is NADH-ubiquinone oxidoreductase chain 4L (MT-ND4L) from Rhinolophus monoceros (Formosan lesser horseshoe bat).